The following is a 274-amino-acid chain: (R)-stereoselective amidase (274 aa).

The region spanning 1–234 (MKIELVQLAG…EVRHVVELDL (234 aa)) is the CN hydrolase domain. The Proton acceptor role is filled by E40. Residue K108 is the Proton donor of the active site. The Nucleophile role is filled by C140.

Monomer.

It carries out the reaction (R)-piperazine-2-carboxamide + H2O = (R)-piperazine-2-carboxylate + NH4(+). It catalyses the reaction beta-alaninamide + H2O = beta-alanine + NH4(+). Its activity is regulated as follows. Completely inhibited by p-chloromercuribenzoate, N-ethylmaleimide, MnSO(4), MnCl(2), CoCl(2), NiCl(2), CuSO(4), CuCl(2), ZnSO(4), ZnCl(2), AgNO(3), CdCl(2), HgCl(2) and PbCl(2). Partially inhibited by FeCl(3) and Fe(NH(4))(2)(SO(4))(2). Slightly enhanced by dithiothreitol. Unaffected by LiBr, H(2)BO(3), NaCl, MgSO(4), MgCl(2), AlCl(3), KCl, CaCl(2), CrCl(3), RbCl, Na(2)MoO(4), (NH(4))(6)Mo(7)O(24), CsCl and BaCl(2). Unaffected by the chelating agents o-phenanthroline, 8-hydroxyquinoline, enthylenediaminetetraacetic acid and alpha,alpha'-dipyridyl. Not inhibited by the carbonyl reagents hydroxylamine, phenylhydrazine, hydrazine, D,L-penicillamine and D-cycloserine. Not affected by the serine protease inhibitor phenylmethanesulfonyl fluoride, the serine/cysteine protease inhibitor leupeptine or the aspartic protease inhibitor pepstatin. Hydrolyzes (R)-piperazine-2-carboxamide and (R)-piperazine-2-tert-butylcarboxamide with strict R-stereoselectivity. Also active towards beta-alaninamide, piperidine-3-carboxmide, D-glutaminamide and slightly active towards L-glutaminamide and piperidine-4-carboxamide. This chain is (R)-stereoselective amidase, found in Pseudomonas sp.